The sequence spans 504 residues: Beta-glucosidase 24 (504 aa).

Positions 1–18 (MELLWLLLLLLMASSTSS) are cleaved as a signal peptide. Glutamine 47 provides a ligand contact to a beta-D-glucoside. N-linked (GlcNAc...) asparagine glycosylation occurs at asparagine 75. Residues histidine 151 and 196–197 (NE) contribute to the a beta-D-glucoside site. Residue glutamate 197 is the Proton donor of the active site. Cysteine 216 and cysteine 224 are joined by a disulfide. N-linked (GlcNAc...) asparagine glycosylation is present at asparagine 329. Tyrosine 340 lines the a beta-D-glucoside pocket. A glycan (N-linked (GlcNAc...) asparagine) is linked at asparagine 371. Glutamate 411 lines the a beta-D-glucoside pocket. Glutamate 411 (nucleophile) is an active-site residue. An N-linked (GlcNAc...) asparagine glycan is attached at asparagine 421. A beta-D-glucoside is bound by residues tryptophan 460, 467–468 (EW), and phenylalanine 476.

It belongs to the glycosyl hydrolase 1 family.

It carries out the reaction Hydrolysis of terminal, non-reducing beta-D-glucosyl residues with release of beta-D-glucose.. The sequence is that of Beta-glucosidase 24 (BGLU24) from Oryza sativa subsp. japonica (Rice).